The sequence spans 365 residues: Histidine biosynthesis bifunctional protein HisB (365 aa).

Residues 1–176 (MTQQPTLFID…VADPKGLGQP (176 aa)) are histidinol-phosphatase. Asp10 (nucleophile) is an active-site residue. Asp10 and Asp12 together coordinate Mg(2+). Asp12 serves as the catalytic Proton donor. The Zn(2+) site is built by Cys93, His95, Cys101, and Cys103. Asp130 lines the Mg(2+) pocket. The tract at residues 177-365 (RHAVVARKTK…NEMPSSKGVL (189 aa)) is imidazoleglycerol-phosphate dehydratase.

The protein in the N-terminal section; belongs to the histidinol-phosphatase family. This sequence in the C-terminal section; belongs to the imidazoleglycerol-phosphate dehydratase family. The cofactor is Mg(2+). Requires Zn(2+) as cofactor.

Its subcellular location is the cytoplasm. It carries out the reaction D-erythro-1-(imidazol-4-yl)glycerol 3-phosphate = 3-(imidazol-4-yl)-2-oxopropyl phosphate + H2O. It catalyses the reaction L-histidinol phosphate + H2O = L-histidinol + phosphate. It functions in the pathway amino-acid biosynthesis; L-histidine biosynthesis; L-histidine from 5-phospho-alpha-D-ribose 1-diphosphate: step 6/9. It participates in amino-acid biosynthesis; L-histidine biosynthesis; L-histidine from 5-phospho-alpha-D-ribose 1-diphosphate: step 8/9. This is Histidine biosynthesis bifunctional protein HisB from Mannheimia succiniciproducens (strain KCTC 0769BP / MBEL55E).